The following is a 259-amino-acid chain: 5'-nucleotidase SurE (259 aa).

Residues Asp-15, Asp-16, Ser-46, and Asn-102 each contribute to the a divalent metal cation site.

It belongs to the SurE nucleotidase family. It depends on a divalent metal cation as a cofactor.

It is found in the cytoplasm. It carries out the reaction a ribonucleoside 5'-phosphate + H2O = a ribonucleoside + phosphate. Its function is as follows. Nucleotidase that shows phosphatase activity on nucleoside 5'-monophosphates. This chain is 5'-nucleotidase SurE, found in Chlorobium luteolum (strain DSM 273 / BCRC 81028 / 2530) (Pelodictyon luteolum).